Consider the following 687-residue polypeptide: MEQSYGGYGAWSAGPANTQGTYGSGVASWQGYENYSYYNAQNTSVPTGTPYSYGPASWEATKASDGGLAAGSSAMHVASFAPEPCTDNSDSLIAKINQRLDMLSKEGGRGGISSGGEGMQDRDSSFRFQPYESYDSRPCMPEHTPYRPSYSYDYDFDLGTDRNGSFGGTFNDCRDPTPERGALDGFLRGRGQGRFQDRSNSSTFIRSDPFMPPSASSEPLSTTWSELNYMGGRGLGGPSTNRPPPSLFSQSMAPDYSMMGMQGVGGFGGTMPYGCGRSQTRIRDWPRRRGFERFGPDNMGRKRKPFPLYEEPDAKLARADSEGDLSENDDGAGDLRSGDEEFRGEDDLCDSRKQRGEKEDEDEDVKKRREKQRRRDRMRDRAADRIQFACSVCKFRSFEDEEIQKHLQSKFHKETLRFISTKLPDKTVEFLQEYIINRNKKIEKRRQELLEKESPKPKPDPFKGIGQEHFFKRIEAAHCLACDMLIPAQHQLLQRHLHSVDHNHNRRLAAEQFKKTSLHVAKSVLNNKHIVKMLEKYLKGEDPFVNETADLETEGDENLGEEKETPEEVAAEVLAEVITAAVKAVEGDGEPAAEHSDVLAEVEGPVDTAEAGSDSHTGKLLEEQTCETASETRNMEDMARGEAAEARNEAAVPAAAAGSPVPVIAIPGILEDELEQTDAEAKDTPTE.

Residues 1–195 (MEQSYGGYGA…FLRGRGQGRF (195 aa)) form an interaction with MCM2 region. The interaction with DPY30 stretch occupies residues 1–210 (MEQSYGGYGA…SSTFIRSDPF (210 aa)). The residue at position 72 (Ser-72) is a Phosphoserine. Residues 104–124 (SKEGGRGGISSGGEGMQDRDS) are disordered. Arg-109 carries the asymmetric dimethylarginine; alternate modification. Arg-109 is subject to Omega-N-methylarginine; alternate. Over residues 109–118 (RGGISSGGEG) the composition is skewed to gly residues. An interaction with DDX5 region spans residues 109–201 (RGGISSGGEG…QGRFQDRSNS (93 aa)). The tract at residues 127-152 (RFQPYESYDSRPCMPEHTPYRPSYSY) is nuclear matrix targeting site. The segment at 189–221 (GRGQGRFQDRSNSSTFIRSDPFMPPSASSEPLS) is disordered. Ser-199 bears the Phosphoserine mark. An omega-N-methylarginine mark is found at Arg-233 and Arg-277. The interval 278–380 (SQTRIRDWPR…KQRRRDRMRD (103 aa)) is disordered. Basic and acidic residues-rich tracts occupy residues 281-295 (RIRD…ERFG) and 312-321 (PDAKLARADS). Residues 287 to 304 (RRRGFERFGPDNMGRKRK) carry the Bipartite nuclear localization signal motif. Lys-315 is covalently cross-linked (Glycyl lysine isopeptide (Lys-Gly) (interchain with G-Cter in SUMO2)). Residues Ser-321, Ser-326, and Ser-337 each carry the phosphoserine modification. Acidic residues predominate over residues 322–332 (EGDLSENDDGA). Over residues 336–358 (RSGDEEFRGEDDLCDSRKQRGEK) the composition is skewed to basic and acidic residues. The involved in chromatin-binding stretch occupies residues 385 to 448 (RIQFACSVCK…NKKIEKRRQE (64 aa)). C2H2 AKAP95-type zinc fingers lie at residues 390-412 (CSVC…SKFH) and 479-502 (CLAC…SVDH). Positions 523–565 (SVLNNKHIVKMLEKYLKGEDPFVNETADLETEGDENLGEEKET) are involved in condensin complex recruitment. Position 553 is a phosphothreonine (Thr-553). Lys-563 participates in a covalent cross-link: Glycyl lysine isopeptide (Lys-Gly) (interchain with G-Cter in SUMO2). The tract at residues 568 to 585 (EVAAEVLAEVITAAVKAV) is RII-binding. A required for interaction with MYCBP region spans residues 572 to 589 (EVLAEVITAAVKAVEGDG). The disordered stretch occupies residues 606 to 687 (VDTAEAGSDS…DAEAKDTPTE (82 aa)). Basic and acidic residues predominate over residues 633–648 (RNMEDMARGEAAEARN). The segment covering 649 to 666 (EAAVPAAAAGSPVPVIAI) has biased composition (low complexity). Ser-659 is modified (phosphoserine).

Belongs to the AKAP95 family. Binds to dimeric RII-alpha regulatory subunit of PKA during mitosis. Interacts (via C-terminus) with FIGN. Interacts with NCAPD2, CCND1, CCND3, MCM2, RPS6KA1, PDE4A, CASP3. Interacts with DDX5, CCNE1. Interacts with NFKB1; detetcted in the cytoplasm. Interacts with MYCBP; MYCBP is translocated to the nucleus and the interaction prevents the association of the PKA catalytic subunit leading to suppression of PKA activity. Interacts with DPY30; mediating AKAP8 association with at least the MLL4/WBP7 HMT complex. Interacts with HDAC3; increased during mitosis. Interacts with GJA1; in the nucleus and in the nuclear membrane; the nuclear association increases with progress of cell cycle G1, S and G2 phase and decreases in M phase. Phosphorylated on tyrosine residues probably by SRC subfamily protein kinases; multiple phosphorylation is leading to dissociation from nuclear structures implicated in chromatin structural changes. In terms of tissue distribution, widely expressed. The protein has been detected in liver, fibroblasts, granulosa, myoblast, lymphoma and Sertoli cells.

It localises to the nucleus matrix. It is found in the nucleus. The protein resides in the nucleolus. Its subcellular location is the cytoplasm. In terms of biological role, anchoring protein that mediates the subcellular compartmentation of cAMP-dependent protein kinase (PKA type II). Acts as an anchor for a PKA-signaling complex onto mitotic chromosomes, which is required for maintenance of chromosomes in a condensed form throughout mitosis. Recruits condensin complex subunit NCAPD2 to chromosomes required for chromatin condensation; the function appears to be independent from PKA-anchoring. May help to deliver cyclin D/E to CDK4 to facilitate cell cycle progression. Required for cell cycle G2/M transition and histone deacetylation during mitosis. In mitotic cells recruits HDAC3 to the vicinity of chromatin leading to deacetylation and subsequent phosphorylation at 'Ser-10' of histone H3; in this function may act redundantly with AKAP8L. Involved in nuclear retention of RPS6KA1 upon ERK activation thus inducing cell proliferation. May be involved in regulation of DNA replication by acting as scaffold for MCM2. Enhances HMT activity of the KMT2 family MLL4/WBP7 complex and is involved in transcriptional regulation. In a teratocarcinoma cell line is involved in retinoic acid-mediated induction of developmental genes implicating H3 'Lys-4' methylation. May be involved in recruitment of active CASP3 to the nucleus in apoptotic cells. May act as a carrier protein of GJA1 for its transport to the nucleus. May play a repressive role in the regulation of rDNA transcription. Preferentially binds GC-rich DNA in vitro. In cells, associates with ribosomal RNA (rRNA) chromatin, preferentially with rRNA promoter and transcribed regions. Involved in modulation of Toll-like receptor signaling. Required for the cAMP-dependent suppression of TNF-alpha in early stages of LPS-induced macrophage activation; the function probably implicates targeting of PKA to NFKB1. In Rattus norvegicus (Rat), this protein is A-kinase anchor protein 8 (Akap8).